A 129-amino-acid chain; its full sequence is Ribosome-binding factor A (129 aa).

Belongs to the RbfA family. Monomer. Binds 30S ribosomal subunits, but not 50S ribosomal subunits or 70S ribosomes.

Its subcellular location is the cytoplasm. Functionally, one of several proteins that assist in the late maturation steps of the functional core of the 30S ribosomal subunit. Associates with free 30S ribosomal subunits (but not with 30S subunits that are part of 70S ribosomes or polysomes). Required for efficient processing of 16S rRNA. May interact with the 5'-terminal helix region of 16S rRNA. This Pseudomonas aeruginosa (strain UCBPP-PA14) protein is Ribosome-binding factor A.